The primary structure comprises 131 residues: Small ribosomal subunit protein uS8 (131 aa).

This sequence belongs to the universal ribosomal protein uS8 family. As to quaternary structure, part of the 30S ribosomal subunit. Contacts proteins S5 and S12.

One of the primary rRNA binding proteins, it binds directly to 16S rRNA central domain where it helps coordinate assembly of the platform of the 30S subunit. This Hydrogenovibrio crunogenus (strain DSM 25203 / XCL-2) (Thiomicrospira crunogena) protein is Small ribosomal subunit protein uS8.